Consider the following 929-residue polypeptide: Probable LRR receptor-like serine/threonine-protein kinase At1g67720 (929 aa).

A signal peptide spans 1 to 21; it reads MGLCLAQLAVTCLFLVPFVLS. Residues 22–531 are Extracellular-facing; sequence QVTEFVSIDC…NEAQRKHFWQ (510 aa). N-linked (GlcNAc...) asparagine glycosylation is found at N36, N173, N236, N293, N320, N332, and N407. 4 LRR repeats span residues 413–437, 438–460, 461–484, and 485–508; these read PPRVTKIALSRKNLRGEIPPGINYM, EALTELWLDDNELTGTLPDMSKL, VNLKIMHLENNQLSGSLPPYLAHL, and PNLQELSIENNSFKGKIPSALLKG. N494 carries N-linked (GlcNAc...) asparagine glycosylation. A helical membrane pass occupies residues 532 to 552; it reads ILGISIAAVAILLLLVGGSLV. Residues 553–929 are Cytoplasmic-facing; it reads LLCALRKTKR…SRNSLAPAAR (377 aa). The region spanning 606–880 is the Protein kinase domain; sequence DNFSKKVGRG…EVIVAIQDAI (275 aa). Residues 612–620 and K634 each bind ATP; that span reads VGRGSFGSV. Y679 carries the phosphotyrosine modification. The Proton acceptor role is filled by D731. Phosphoserine occurs at positions 735 and 764. T770 bears the Phosphothreonine mark. Y778 carries the phosphotyrosine modification.

This sequence belongs to the protein kinase superfamily. Ser/Thr protein kinase family.

Its subcellular location is the membrane. The enzyme catalyses L-seryl-[protein] + ATP = O-phospho-L-seryl-[protein] + ADP + H(+). It catalyses the reaction L-threonyl-[protein] + ATP = O-phospho-L-threonyl-[protein] + ADP + H(+). This Arabidopsis thaliana (Mouse-ear cress) protein is Probable LRR receptor-like serine/threonine-protein kinase At1g67720.